The sequence spans 42 residues: Iota-conotoxin-like R11.15 (42 aa).

Intrachain disulfides connect cysteine 5–cysteine 19, cysteine 12–cysteine 22, cysteine 18–cysteine 27, and cysteine 21–cysteine 36.

This sequence belongs to the conotoxin I1 superfamily. Expressed by the venom duct.

The protein localises to the secreted. Its function is as follows. Iota-conotoxins bind to voltage-gated sodium channels (Nav) and act as agonists by shifting the voltage-dependence of activation to more hyperpolarized levels. Produces general excitatory symptoms. The protein is Iota-conotoxin-like R11.15 of Conus radiatus (Rayed cone).